Here is a 216-residue protein sequence, read N- to C-terminus: MOB kinase activator 1B (216 aa).

The residue at position 2 (Ser2) is an N-acetylserine. Thr12 and Thr35 each carry phosphothreonine; by STK4/MST1. Cys79, Cys84, His161, and His166 together coordinate Zn(2+).

This sequence belongs to the MOB1/phocein family. As to quaternary structure, binds STK38L. Interacts with LATS1 and LATS2. Phosphorylated by STK3/MST2 and STK4/MST1 and this phosphorylation enhances its binding to LATS1. Adrenal gland, bone marrow, brain, lung, placenta, prostate, salivary gland, skeletal muscle, testis, thymus, thyroid gland, uterus, colon with mucosa, fetal brain and fetal liver.

It is found in the cytoplasm. Its subcellular location is the nucleus. Activator of LATS1/2 in the Hippo signaling pathway which plays a pivotal role in organ size control and tumor suppression by restricting proliferation and promoting apoptosis. The core of this pathway is composed of a kinase cascade wherein STK3/MST2 and STK4/MST1, in complex with its regulatory protein SAV1, phosphorylates and activates LATS1/2 in complex with its regulatory protein MOB1, which in turn phosphorylates and inactivates YAP1 oncoprotein and WWTR1/TAZ. Phosphorylation of YAP1 by LATS1/2 inhibits its translocation into the nucleus to regulate cellular genes important for cell proliferation, cell death, and cell migration. Stimulates the kinase activity of STK38L. The polypeptide is MOB kinase activator 1B (Homo sapiens (Human)).